Here is a 428-residue protein sequence, read N- to C-terminus: Gamma-glutamyl phosphate reductase (428 aa).

It belongs to the gamma-glutamyl phosphate reductase family.

It localises to the cytoplasm. It carries out the reaction L-glutamate 5-semialdehyde + phosphate + NADP(+) = L-glutamyl 5-phosphate + NADPH + H(+). It functions in the pathway amino-acid biosynthesis; L-proline biosynthesis; L-glutamate 5-semialdehyde from L-glutamate: step 2/2. Its function is as follows. Catalyzes the NADPH-dependent reduction of L-glutamate 5-phosphate into L-glutamate 5-semialdehyde and phosphate. The product spontaneously undergoes cyclization to form 1-pyrroline-5-carboxylate. In Chelativorans sp. (strain BNC1), this protein is Gamma-glutamyl phosphate reductase.